Here is a 403-residue protein sequence, read N- to C-terminus: uncharacterized protein (403 aa).

The next 6 helical transmembrane spans lie at 31–51 (FLIA…IGSF), 186–206 (LPIG…GIIV), 238–258 (ISAV…PIII), 268–288 (LAIF…SLLC), 303–323 (LISP…TIMV), and 355–375 (LIEI…SFIL).

To B.subtilis YhaP.

The protein resides in the cell membrane. This is an uncharacterized protein from Methanocaldococcus jannaschii (strain ATCC 43067 / DSM 2661 / JAL-1 / JCM 10045 / NBRC 100440) (Methanococcus jannaschii).